A 341-amino-acid polypeptide reads, in one-letter code: KH domain-containing RNA-binding protein QKI (341 aa).

The interval 11–82 is qua1 domain; involved in homodimerization; sequence PNPTPDYLMQ…PDAVGPIVQL (72 aa). The KH domain maps to 87 to 153; sequence YVPVKEYPDF…WEHLNEDLHV (67 aa). The interval 182–213 is qua2 domain; involved in RNA binding; that stretch reads AAEGEDSLKKMQLMELAILNGTYRDANIKSPA. Position 188 is a phosphoserine (S188). An Omega-N-methylarginine modification is found at R227. R242 bears the Asymmetric dimethylarginine; by CARM1; alternate mark. R242 is subject to Omega-N-methylarginine; alternate. An Omega-N-methylarginine modification is found at R256. The SH3-binding signature appears at 276 to 279; sequence PPGP. The Nuclear localization signal motif lies at 324–330; sequence RVHPYQR.

Belongs to the quaking family. Homodimer; does not require RNA to homodimerize. Able to heterodimerize with BICC1. Methylated by PRMT1. In terms of processing, tyrosine phosphorylated at its C-terminus, probably by FYN. Phosphorylation leads to decreased mRNA-binding affinity, affecting transport and/or stabilization of MBP mRNA. Post-translationally, ubiquitinated by RNF6 in macrophages, leading to its degradation. In terms of tissue distribution, present in myelinating oligodendrocytes (at protein level).

It localises to the nucleus. Its subcellular location is the cytoplasm. In terms of biological role, RNA reader protein, which recognizes and binds specific RNAs, thereby regulating RNA metabolic processes, such as pre-mRNA splicing, circular RNA (circRNA) formation, mRNA export, mRNA stability and/or translation. Involved in various cellular processes, such as mRNA storage into stress granules, apoptosis, lipid deposition, interferon response, glial cell fate and development. Binds to the 5'-NACUAAY-N(1,20)-UAAY-3' RNA core sequence. Acts as a mRNA modification reader that specifically recognizes and binds mRNA transcripts modified by internal N(7)-methylguanine (m7G). Promotes the formation of circular RNAs (circRNAs) during the epithelial to mesenchymal transition and in cardiomyocytes: acts by binding to sites flanking circRNA-forming exons. CircRNAs are produced by back-splicing circularization of pre-mRNAs. Plays a central role in myelinization via 3 distinct mechanisms. First, acts by protecting and promoting stability of target mRNAs such as MBP, SIRT2 and CDKN1B, which promotes oligodendrocyte differentiation. Second, participates in mRNA transport by regulating the nuclear export of MBP mRNA. Finally, indirectly regulates mRNA splicing of MAG pre-mRNA during oligodendrocyte differentiation by acting as a negative regulator of MAG exon 12 alternative splicing: acts by binding to HNRNPA1 mRNA splicing factor, preventing its translation. Involved in microglia differentiation and remyelination by regulating microexon alternative splicing of the Rho GTPase pathway. Involved in macrophage differentiation: promotes monocyte differentiation by regulating pre-mRNA splicing in naive peripheral blood monocytes. Acts as an important regulator of muscle development: required for the contractile function of cardiomyocytes by regulating alternative splicing of cardiomyocyte transcripts. Acts as a negative regulator of thermogenesis by decreasing stability, nuclear export and translation of mRNAs encoding PPARGC1A and UCP1. Also required for visceral endoderm function and blood vessel development. May also play a role in smooth muscle development. In addition to its RNA-binding activity, also acts as a nuclear transcription coactivator for SREBF2/SREBP2. This is KH domain-containing RNA-binding protein QKI from Rattus norvegicus (Rat).